The primary structure comprises 573 residues: Dilute domain-containing protein SPAC25B8.08 (573 aa).

In terms of domain architecture, Dilute spans 180-464; that stretch reads NAFLCEVNQV…LKKLDAFHEE (285 aa).

It is found in the cytoplasm. Its subcellular location is the golgi apparatus. This Schizosaccharomyces pombe (strain 972 / ATCC 24843) (Fission yeast) protein is Dilute domain-containing protein SPAC25B8.08.